A 785-amino-acid polypeptide reads, in one-letter code: Probable ATP-dependent RNA helicase ddx17 (785 aa).

Low complexity-rich tracts occupy residues Met1 to Gly11, Ser18 to Ser37, Ser49 to Ser95, and Gly105 to Ser177. A disordered region spans residues Met1 to Ser233. Residues Lys178 to Gly191 are compositionally biased toward polar residues. Positions Pro192 to Ser233 are enriched in low complexity. Residues Met384 to Ser412 carry the Q motif motif. The Helicase ATP-binding domain occupies Trp415–Val590. An ATP-binding site is contributed by Ala428–Thr435. The DEAD box signature appears at Asp538–Asp541. Positions Asn602 to Ser763 constitute a Helicase C-terminal domain. A compositionally biased stretch (polar residues) spans Val764–Lys774. A disordered region spans residues Val764–Tyr785.

The protein belongs to the DEAD box helicase family. DDX5/DBP2 subfamily.

The protein resides in the cytoplasm. The protein localises to the nucleus. It catalyses the reaction ATP + H2O = ADP + phosphate + H(+). In terms of biological role, probable ATP-dependent RNA helicase which may be involved nonsense-mediated mRNA decay and ribosome biogenesis through rRNA processing. The polypeptide is Probable ATP-dependent RNA helicase ddx17 (ddx17) (Dictyostelium discoideum (Social amoeba)).